We begin with the raw amino-acid sequence, 701 residues long: Elongation factor G (701 aa).

Positions 8–291 constitute a tr-type G domain; it reads SRYRNIGIVA…AVIDYLPAPV (284 aa). Residues 17–24, 89–93, and 143–146 contribute to the GTP site; these read AHVDAGKT, DTPGH, and NKMD.

This sequence belongs to the TRAFAC class translation factor GTPase superfamily. Classic translation factor GTPase family. EF-G/EF-2 subfamily.

The protein localises to the cytoplasm. Its function is as follows. Catalyzes the GTP-dependent ribosomal translocation step during translation elongation. During this step, the ribosome changes from the pre-translocational (PRE) to the post-translocational (POST) state as the newly formed A-site-bound peptidyl-tRNA and P-site-bound deacylated tRNA move to the P and E sites, respectively. Catalyzes the coordinated movement of the two tRNA molecules, the mRNA and conformational changes in the ribosome. This chain is Elongation factor G, found in Pseudomonas fluorescens (strain SBW25).